A 183-amino-acid polypeptide reads, in one-letter code: NEDD8-conjugating enzyme Ubc12 (183 aa).

The residue at position 1 (methionine 1) is an N-acetylmethionine. A disordered region spans residues 1 to 28 (MIKLFSLKQQKKEEESAGGTKGSSKKAS). A UBC core domain is found at 29 to 173 (AAQLRIQKDI…VQRSMRGGYI (145 aa)). Cysteine 111 serves as the catalytic Glycyl thioester intermediate.

Belongs to the ubiquitin-conjugating enzyme family. UBC12 subfamily. Post-translationally, the acetylation of Met-1 increases affinity for DCUN1D1 by about 2 orders of magnitude and is crucial for NEDD8 transfer to cullins.

It catalyses the reaction [E1 NEDD8-activating enzyme]-S-[NEDD8 protein]-yl-L-cysteine + [E2 NEDD8-conjugating enzyme]-L-cysteine = [E1 NEDD8-activating enzyme]-L-cysteine + [E2 NEDD8-conjugating enzyme]-S-[NEDD8-protein]-yl-L-cysteine.. Its pathway is protein modification; protein neddylation. In terms of biological role, accepts the ubiquitin-like protein NEDD8 from the UBA3-NAE1 E1 complex and catalyzes its covalent attachment to other proteins. The specific interaction with the E3 ubiquitin ligase rbx1, but not rbx2, suggests that the rbx1-ube2m complex neddylates specific target proteins, such as cul1, cul2, cul3 and cul4. Involved in cell proliferation. The sequence is that of NEDD8-conjugating enzyme Ubc12 (ube2m) from Xenopus laevis (African clawed frog).